A 351-amino-acid polypeptide reads, in one-letter code: UDP-N-acetylenolpyruvoylglucosamine reductase (351 aa).

One can recognise an FAD-binding PCMH-type domain in the interval 25–196 (HIQAQARWLL…AAVEFRLPLL (172 aa)). Residue arginine 173 is part of the active site. Serine 246 serves as the catalytic Proton donor. Residue glutamate 343 is part of the active site.

Belongs to the MurB family. FAD is required as a cofactor.

The protein resides in the cytoplasm. It carries out the reaction UDP-N-acetyl-alpha-D-muramate + NADP(+) = UDP-N-acetyl-3-O-(1-carboxyvinyl)-alpha-D-glucosamine + NADPH + H(+). It participates in cell wall biogenesis; peptidoglycan biosynthesis. Cell wall formation. The protein is UDP-N-acetylenolpyruvoylglucosamine reductase of Xylella fastidiosa (strain 9a5c).